A 666-amino-acid chain; its full sequence is Translation factor guf1, mitochondrial (666 aa).

The N-terminal 44 residues, Met1 to Tyr44, are a transit peptide targeting the mitochondrion. The tr-type G domain maps to Glu68–Ile248. GTP-binding positions include Ala77 to Ser84, Asp141 to His145, and Asn195 to Asp198.

It belongs to the TRAFAC class translation factor GTPase superfamily. Classic translation factor GTPase family. LepA subfamily.

It is found in the mitochondrion inner membrane. The catalysed reaction is GTP + H2O = GDP + phosphate + H(+). In terms of biological role, promotes mitochondrial protein synthesis. May act as a fidelity factor of the translation reaction, by catalyzing a one-codon backward translocation of tRNAs on improperly translocated ribosomes. Binds to mitochondrial ribosomes in a GTP-dependent manner. The polypeptide is Translation factor guf1, mitochondrial (guf1) (Penicillium rubens (strain ATCC 28089 / DSM 1075 / NRRL 1951 / Wisconsin 54-1255) (Penicillium chrysogenum)).